Consider the following 119-residue polypeptide: Small ribosomal subunit protein uS10 (119 aa).

The protein belongs to the universal ribosomal protein uS10 family. As to quaternary structure, component of the small ribosomal subunit. Mature ribosomes consist of a small (40S) and a large (60S) subunit. The 40S subunit contains about 32 different proteins and 1 molecule of RNA (18S). The 60S subunit contains 45 different proteins and 3 molecules of RNA (25S, 5.8S and 5S).

It is found in the cytoplasm. Functionally, component of the ribosome, a large ribonucleoprotein complex responsible for the synthesis of proteins in the cell. The small ribosomal subunit (SSU) binds messenger RNAs (mRNAs) and translates the encoded message by selecting cognate aminoacyl-transfer RNA (tRNA) molecules. The large subunit (LSU) contains the ribosomal catalytic site termed the peptidyl transferase center (PTC), which catalyzes the formation of peptide bonds, thereby polymerizing the amino acids delivered by tRNAs into a polypeptide chain. The nascent polypeptides leave the ribosome through a tunnel in the LSU and interact with protein factors that function in enzymatic processing, targeting, and the membrane insertion of nascent chains at the exit of the ribosomal tunnel. In Candida albicans (strain SC5314 / ATCC MYA-2876) (Yeast), this protein is Small ribosomal subunit protein uS10 (RPS20).